Consider the following 346-residue polypeptide: Alkylated DNA repair protein ALKBH8 homolog (346 aa).

Residues 1–21 (MVQPRFVRPTQSSPSSISGEP) form a disordered region. Low complexity predominate over residues 12-21 (SSPSSISGEP). Positions 24–102 (SNLYVANCGP…RSLHIRYSVL (79 aa)) constitute an RRM domain. In terms of domain architecture, Fe2OG dioxygenase spans 208-328 (NLDQLTVNEY…RVSFTLRKVR (121 aa)). Residues histidine 226, aspartate 228, and histidine 298 each coordinate Fe cation. Residues arginine 319 and arginine 325 each contribute to the 2-oxoglutarate site.

It belongs to the alkB family. Fe(2+) serves as cofactor.

Functionally, binds tRNA and catalyzes the iron and alpha-ketoglutarate dependent hydroxylation of 5-methylcarboxymethyl uridine at the wobble position of the anticodon loop in tRNA via its dioxygenase domain, giving rise to 5-(S)-methoxycarbonylhydroxymethyluridine. This Arabidopsis thaliana (Mouse-ear cress) protein is Alkylated DNA repair protein ALKBH8 homolog.